Reading from the N-terminus, the 426-residue chain is Glutamate-1-semialdehyde 2,1-aminomutase (426 aa).

Lys265 is modified (N6-(pyridoxal phosphate)lysine).

The protein belongs to the class-III pyridoxal-phosphate-dependent aminotransferase family. HemL subfamily. Homodimer. It depends on pyridoxal 5'-phosphate as a cofactor.

The protein localises to the cytoplasm. The catalysed reaction is (S)-4-amino-5-oxopentanoate = 5-aminolevulinate. Its pathway is porphyrin-containing compound metabolism; protoporphyrin-IX biosynthesis; 5-aminolevulinate from L-glutamyl-tRNA(Glu): step 2/2. The chain is Glutamate-1-semialdehyde 2,1-aminomutase (hemL) from Salmonella typhimurium (strain SL1344).